A 505-amino-acid polypeptide reads, in one-letter code: ATP synthase subunit alpha, chloroplastic (505 aa).

170 to 177 provides a ligand contact to ATP; sequence GDRQTGKT.

Belongs to the ATPase alpha/beta chains family. In terms of assembly, F-type ATPases have 2 components, CF(1) - the catalytic core - and CF(0) - the membrane proton channel. CF(1) has five subunits: alpha(3), beta(3), gamma(1), delta(1), epsilon(1). CF(0) has four main subunits: a, b, b' and c.

It is found in the plastid. The protein resides in the chloroplast thylakoid membrane. It catalyses the reaction ATP + H2O + 4 H(+)(in) = ADP + phosphate + 5 H(+)(out). Produces ATP from ADP in the presence of a proton gradient across the membrane. The alpha chain is a regulatory subunit. This Oenothera parviflora (Small-flowered evening primrose) protein is ATP synthase subunit alpha, chloroplastic.